The primary structure comprises 355 residues: MSATPVTQLTPSSQPQQPCLPLLGASVTELTSWVQQQGQPAYRGKQLHDWIYHKGVRSLTDISVFSKQWRAAVADVPIGRSTIHHRSVASDGTVKYLLQLSDGEIVETVGIPTDKRLTVCVSTQVGCPMACDFCATGKGGYKRNLERHEIVDQVLTVQEDFQQRVSHVVFMGMGEPLLNTENVLAALRSLNQDVGIGQRSLTLSTVGIRDRISQLAEHHLQVTLAVSLHAPNQALREQLIPSARSYHIEDLLAECREYVAITGRRISFEYILLAGVNDLPEHALELSKHLRGFQNHVNLIPYNPISEVDYKRPSGDRIQAFLTVLQQQHIAVSVRYSRGLEADAACGQLRTKTSR.

E107 serves as the catalytic Proton acceptor. Residues 113–341 (TDKRLTVCVS…VSVRYSRGLE (229 aa)) enclose the Radical SAM core domain. C120 and C346 are joined by a disulfide. The [4Fe-4S] cluster site is built by C127, C131, and C134. Residues 174 to 175 (GE), S204, 227 to 229 (SLH), and N303 contribute to the S-adenosyl-L-methionine site. The S-methylcysteine intermediate role is filled by C346.

Belongs to the radical SAM superfamily. RlmN family. Requires [4Fe-4S] cluster as cofactor.

The protein localises to the cytoplasm. The catalysed reaction is adenosine(2503) in 23S rRNA + 2 reduced [2Fe-2S]-[ferredoxin] + 2 S-adenosyl-L-methionine = 2-methyladenosine(2503) in 23S rRNA + 5'-deoxyadenosine + L-methionine + 2 oxidized [2Fe-2S]-[ferredoxin] + S-adenosyl-L-homocysteine. The enzyme catalyses adenosine(37) in tRNA + 2 reduced [2Fe-2S]-[ferredoxin] + 2 S-adenosyl-L-methionine = 2-methyladenosine(37) in tRNA + 5'-deoxyadenosine + L-methionine + 2 oxidized [2Fe-2S]-[ferredoxin] + S-adenosyl-L-homocysteine. In terms of biological role, specifically methylates position 2 of adenine 2503 in 23S rRNA and position 2 of adenine 37 in tRNAs. This chain is Probable dual-specificity RNA methyltransferase RlmN, found in Trichormus variabilis (strain ATCC 29413 / PCC 7937) (Anabaena variabilis).